Here is a 40-residue protein sequence, read N- to C-terminus: Large ribosomal subunit protein bL36 (40 aa).

It belongs to the bacterial ribosomal protein bL36 family.

This chain is Large ribosomal subunit protein bL36, found in Corynebacterium kroppenstedtii (strain DSM 44385 / JCM 11950 / CIP 105744 / CCUG 35717).